An 82-amino-acid polypeptide reads, in one-letter code: Small ribosomal subunit protein bS16 (82 aa).

It belongs to the bacterial ribosomal protein bS16 family.

The polypeptide is Small ribosomal subunit protein bS16 (Shewanella sp. (strain ANA-3)).